A 435-amino-acid polypeptide reads, in one-letter code: ATP-dependent protease ATPase subunit HslU (435 aa).

ATP is bound by residues I18, 60-65 (GVGKTE), D248, E313, and R385.

The protein belongs to the ClpX chaperone family. HslU subfamily. In terms of assembly, a double ring-shaped homohexamer of HslV is capped on each side by a ring-shaped HslU homohexamer. The assembly of the HslU/HslV complex is dependent on binding of ATP.

It is found in the cytoplasm. Its function is as follows. ATPase subunit of a proteasome-like degradation complex; this subunit has chaperone activity. The binding of ATP and its subsequent hydrolysis by HslU are essential for unfolding of protein substrates subsequently hydrolyzed by HslV. HslU recognizes the N-terminal part of its protein substrates and unfolds these before they are guided to HslV for hydrolysis. The sequence is that of ATP-dependent protease ATPase subunit HslU from Rhizobium johnstonii (strain DSM 114642 / LMG 32736 / 3841) (Rhizobium leguminosarum bv. viciae).